Consider the following 201-residue polypeptide: Small ribosomal subunit protein uS4c (201 aa).

The interval 20–44 (GLTSKRPRAGSDLRNQSRSGKKSQY) is disordered. Residues 89–152 (MRLDNTLFRL…NSRTLVQNLL (64 aa)) enclose the S4 RNA-binding domain.

It belongs to the universal ribosomal protein uS4 family. As to quaternary structure, part of the 30S ribosomal subunit. Contacts protein S5. The interaction surface between S4 and S5 is involved in control of translational fidelity.

It localises to the plastid. The protein localises to the chloroplast. Its function is as follows. One of the primary rRNA binding proteins, it binds directly to 16S rRNA where it nucleates assembly of the body of the 30S subunit. With S5 and S12 plays an important role in translational accuracy. The polypeptide is Small ribosomal subunit protein uS4c (rps4) (Aethionema grandiflorum (Persian stone-cress)).